The chain runs to 357 residues: MADAAVIEKLEAGFKKLEAATDCKSLLKKYLTKEVFDKLKDKKTSLGATLLDVIQSGVENLDSGVGIYAPDAEAYTLFAPLFDPIIEDYHVGFKQTDKHPNKDFGDVNSFVNVDPEGKFVISTRVRCGRSMQGYPFNPCLTESQYKEMEAKVSSTLSSLEGELKGTYYPLTGMSKEVQQKLIDDHFLFKEGDRFLQAANACRYWPAGRGIYHNDNKTFLVWVNEEDHLRIISMQMGGDLGQVFRRLTSAVNEIEKRIPFSHHDRLGFLTFCPTNLGTTVRASVHIKLPKLAANREKLEEVAGKYNLQVRGTRGEHTEAEGGIYDISNKRRMGLTEFQAVKEMQDGILELIKIEKEMI.

One can recognise a Phosphagen kinase N-terminal domain in the interval 9–91 (KLEAGFKKLE…FDPIIEDYHV (83 aa)). 64–68 (GVGIY) lines the L-arginine pocket. The Phosphagen kinase C-terminal domain maps to 119–356 (FVISTRVRCG…LELIKIEKEM (238 aa)). Residues 122 to 126 (STRVR) and His-185 contribute to the ATP site. Glu-225 is an L-arginine binding site. Position 229 (Arg-229) interacts with ATP. Residue Cys-271 participates in L-arginine binding. ATP is bound by residues 280–284 (RASVH) and 309–314 (RGTRGE). Position 314 (Glu-314) interacts with L-arginine.

The protein belongs to the ATP:guanido phosphotransferase family.

It catalyses the reaction L-arginine + ATP = N(omega)-phospho-L-arginine + ADP + H(+). Its function is as follows. Catalyzes the reversible transfer of high energy ATP gamma-phosphate group to L-arginine. In Metapenaeus ensis (Greasyback shrimp), this protein is Arginine kinase Met e 2.